Here is a 215-residue protein sequence, read N- to C-terminus: CASP-like protein UU3 (215 aa).

The Cytoplasmic portion of the chain corresponds to 1–44; that stretch reads MATAWESEYFDKVTPGERERAVPPMVPQQTPPPVYIQPQVSRNG. A helical transmembrane segment spans residues 45 to 65; the sequence is IVASIVLRLLTLIFAVVALAV. The Extracellular segment spans residues 66-93; the sequence is LASNTGSFQVSTGSATSVKTIKFTILSA. Residues 94–114 form a helical membrane-spanning segment; it reads FTYLFAVCGVVAVYSLLLIIV. The Cytoplasmic segment spans residues 115–128; that stretch reads EMIDLAVRGFTTHT. Residues 129–149 form a helical membrane-spanning segment; it reads LVAIFVFVLDQTMAYVLISAA. Residues 150–185 are Extracellular-facing; that stretch reads SASANGVKVSRDESNITGYKFDISCSNLGIDDYCTK. Residue N164 is glycosylated (N-linked (GlcNAc...) asparagine). A helical transmembrane segment spans residues 186 to 206; it reads ASASVAIAFIAFLFMAITAGV. The Cytoplasmic segment spans residues 207–215; that stretch reads SARRLFKLP.

This sequence belongs to the Casparian strip membrane proteins (CASP) family. As to quaternary structure, homodimer and heterodimers.

It is found in the cell membrane. This Physcomitrium patens (Spreading-leaved earth moss) protein is CASP-like protein UU3.